The following is a 334-amino-acid chain: YbbR-like domain-containing protein BB_0009 (334 aa).

A helical membrane pass occupies residues 22-38 (AISILIAILMFVAFNFN). 2 consecutive YbbR-like domains span residues 43–128 (ITTE…NVLL) and 138–220 (VKIE…VVNI).

It is found in the membrane. The chain is YbbR-like domain-containing protein BB_0009 from Borreliella burgdorferi (strain ATCC 35210 / DSM 4680 / CIP 102532 / B31) (Borrelia burgdorferi).